The chain runs to 375 residues: Acetylornithine aminotransferase (375 aa).

Residues glycine 93–threonine 94 and phenylalanine 120 each bind pyridoxal 5'-phosphate. A N(2)-acetyl-L-ornithine-binding site is contributed by arginine 123. A pyridoxal 5'-phosphate-binding site is contributed by aspartate 205–glutamine 208. Residue lysine 234 is modified to N6-(pyridoxal phosphate)lysine. Threonine 262 serves as a coordination point for N(2)-acetyl-L-ornithine. Residue threonine 263 coordinates pyridoxal 5'-phosphate.

It belongs to the class-III pyridoxal-phosphate-dependent aminotransferase family. ArgD subfamily. In terms of assembly, homodimer. It depends on pyridoxal 5'-phosphate as a cofactor.

It localises to the cytoplasm. The catalysed reaction is N(2)-acetyl-L-ornithine + 2-oxoglutarate = N-acetyl-L-glutamate 5-semialdehyde + L-glutamate. It participates in amino-acid biosynthesis; L-arginine biosynthesis; N(2)-acetyl-L-ornithine from L-glutamate: step 4/4. This chain is Acetylornithine aminotransferase, found in Staphylococcus epidermidis (strain ATCC 12228 / FDA PCI 1200).